We begin with the raw amino-acid sequence, 185 residues long: Ribosome-recycling factor (185 aa).

Residues 137 to 158 form a disordered region; the sequence is DELKKLEKDHTASEDEVKRAQD.

The protein belongs to the RRF family.

The protein localises to the cytoplasm. Its function is as follows. Responsible for the release of ribosomes from messenger RNA at the termination of protein biosynthesis. May increase the efficiency of translation by recycling ribosomes from one round of translation to another. This Desulfitobacterium hafniense (strain Y51) protein is Ribosome-recycling factor.